Here is a 114-residue protein sequence, read N- to C-terminus: T cell receptor beta variable 9 (114 aa).

The N-terminal stretch at 1–21 (MGFRLLCCVAFCLLGAGPVDS) is a signal peptide. An Ig-like domain is found at 22-114 (GVTQTPKHLI…SALYFCASSV (93 aa)). Cys-42 and Cys-110 are joined by a disulfide. N-linked (GlcNAc...) asparagine glycosylation is present at Asn-96.

Alpha-beta TR is a heterodimer composed of an alpha and beta chain; disulfide-linked. The alpha-beta TR is associated with the transmembrane signaling CD3 coreceptor proteins to form the TR-CD3 (TcR or TCR). The assembly of alpha-beta TR heterodimers with CD3 occurs in the endoplasmic reticulum where a single alpha-beta TR heterodimer associates with one CD3D-CD3E heterodimer, one CD3G-CD3E heterodimer and one CD247 homodimer forming a stable octameric structure. CD3D-CD3E and CD3G-CD3E heterodimers preferentially associate with TR alpha and TR beta chains, respectively. The association of the CD247 homodimer is the last step of TcR assembly in the endoplasmic reticulum and is required for transport to the cell surface.

Its subcellular location is the cell membrane. In terms of biological role, v region of the variable domain of T cell receptor (TR) beta chain that participates in the antigen recognition. Alpha-beta T cell receptors are antigen specific receptors which are essential to the immune response and are present on the cell surface of T lymphocytes. Recognize peptide-major histocompatibility (MH) (pMH) complexes that are displayed by antigen presenting cells (APC), a prerequisite for efficient T cell adaptive immunity against pathogens. Binding of alpha-beta TR to pMH complex initiates TR-CD3 clustering on the cell surface and intracellular activation of LCK that phosphorylates the ITAM motifs of CD3G, CD3D, CD3E and CD247 enabling the recruitment of ZAP70. In turn ZAP70 phosphorylates LAT, which recruits numerous signaling molecules to form the LAT signalosome. The LAT signalosome propagates signal branching to three major signaling pathways, the calcium, the mitogen-activated protein kinase (MAPK) kinase and the nuclear factor NF-kappa-B (NF-kB) pathways, leading to the mobilization of transcription factors that are critical for gene expression and essential for T cell growth and differentiation. The T cell repertoire is generated in the thymus, by V-(D)-J rearrangement. This repertoire is then shaped by intrathymic selection events to generate a peripheral T cell pool of self-MH restricted, non-autoaggressive T cells. Post-thymic interaction of alpha-beta TR with the pMH complexes shapes TR structural and functional avidity. This is T cell receptor beta variable 9 from Homo sapiens (Human).